Reading from the N-terminus, the 340-residue chain is Probable allantoicase (340 aa).

This sequence belongs to the allantoicase family.

The enzyme catalyses allantoate + H2O = (S)-ureidoglycolate + urea. Its pathway is nitrogen metabolism; (S)-allantoin degradation; (S)-ureidoglycolate from allantoate (aminidohydrolase route): step 1/1. The polypeptide is Probable allantoicase (Rhizobium meliloti (strain 1021) (Ensifer meliloti)).